Consider the following 226-residue polypeptide: 2-C-methyl-D-erythritol 4-phosphate cytidylyltransferase (226 aa).

It belongs to the IspD/TarI cytidylyltransferase family. IspD subfamily.

The catalysed reaction is 2-C-methyl-D-erythritol 4-phosphate + CTP + H(+) = 4-CDP-2-C-methyl-D-erythritol + diphosphate. It participates in isoprenoid biosynthesis; isopentenyl diphosphate biosynthesis via DXP pathway; isopentenyl diphosphate from 1-deoxy-D-xylulose 5-phosphate: step 2/6. In terms of biological role, catalyzes the formation of 4-diphosphocytidyl-2-C-methyl-D-erythritol from CTP and 2-C-methyl-D-erythritol 4-phosphate (MEP). In Synechococcus sp. (strain CC9902), this protein is 2-C-methyl-D-erythritol 4-phosphate cytidylyltransferase.